A 361-amino-acid polypeptide reads, in one-letter code: NAD-dependent protein deacetylase hst2-1 (361 aa).

The Deacetylase sirtuin-type domain occupies 16-276; it reads SVLEARTVEA…RKLARALGWE (261 aa). NAD(+) is bound by residues 43-63 and 126-129; these read GAGISTAAGIPDFRSPDTGIY and QNID. The active-site Proton acceptor is His146. Residues Cys154, Cys157, Cys178, and Cys181 each coordinate Zn(2+). NAD(+) contacts are provided by residues 217–219, 242–244, and Cys262; these read GTS and NRE. A coiled-coil region spans residues 294–328; sequence EEELATPRTREERLENEISRLTAEIDKTLKISDAY. The disordered stretch occupies residues 335–361; that stretch reads RLEGEPLSSPESNGTGLAHVFPHLARR.

The protein belongs to the sirtuin family. Class I subfamily. Requires Zn(2+) as cofactor.

The protein resides in the cytoplasm. It is found in the nucleus. It carries out the reaction N(6)-acetyl-L-lysyl-[protein] + NAD(+) + H2O = 2''-O-acetyl-ADP-D-ribose + nicotinamide + L-lysyl-[protein]. NAD-dependent histone deacetylase, which could function in telomeric silencing, cell cycle progression and chromosome stability. The sequence is that of NAD-dependent protein deacetylase hst2-1 from Emericella nidulans (strain FGSC A4 / ATCC 38163 / CBS 112.46 / NRRL 194 / M139) (Aspergillus nidulans).